The primary structure comprises 94 residues: Co-chaperonin GroES (94 aa).

The protein belongs to the GroES chaperonin family. In terms of assembly, heptamer of 7 subunits arranged in a ring. Interacts with the chaperonin GroEL.

The protein localises to the cytoplasm. Together with the chaperonin GroEL, plays an essential role in assisting protein folding. The GroEL-GroES system forms a nano-cage that allows encapsulation of the non-native substrate proteins and provides a physical environment optimized to promote and accelerate protein folding. GroES binds to the apical surface of the GroEL ring, thereby capping the opening of the GroEL channel. In Streptococcus equinus (Streptococcus bovis), this protein is Co-chaperonin GroES.